The primary structure comprises 243 residues: Orotidine 5'-phosphate decarboxylase (243 aa).

Residues Asp16, Lys38, 65–74, Thr120, Arg181, Gln190, Gly210, and Arg211 contribute to the substrate site; that span reads DLKLHDIPNT. The active-site Proton donor is the Lys67.

It belongs to the OMP decarboxylase family. Type 1 subfamily. Homodimer.

The catalysed reaction is orotidine 5'-phosphate + H(+) = UMP + CO2. The protein operates within pyrimidine metabolism; UMP biosynthesis via de novo pathway; UMP from orotate: step 2/2. In terms of biological role, catalyzes the decarboxylation of orotidine 5'-monophosphate (OMP) to uridine 5'-monophosphate (UMP). This is Orotidine 5'-phosphate decarboxylase from Bradyrhizobium sp. (strain ORS 278).